A 336-amino-acid chain; its full sequence is Tryptophan--tRNA ligase 1 (336 aa).

Residues 9–11 and 17–18 contribute to the ATP site; these read KPT and GN. Residues 10–18 carry the 'HIGH' region motif; sequence PTGHLTLGN. Residue Asp137 coordinates L-tryptophan. ATP-binding positions include 149 to 151, Val188, and 197 to 201; these read GED and KMGKS. Residues 197–201 carry the 'KMSKS' region motif; the sequence is KMGKS.

Belongs to the class-I aminoacyl-tRNA synthetase family. In terms of assembly, homodimer.

It is found in the cytoplasm. It carries out the reaction tRNA(Trp) + L-tryptophan + ATP = L-tryptophyl-tRNA(Trp) + AMP + diphosphate + H(+). Catalyzes the attachment of tryptophan to tRNA(Trp). This chain is Tryptophan--tRNA ligase 1, found in Streptomyces coelicolor (strain ATCC BAA-471 / A3(2) / M145).